A 316-amino-acid polypeptide reads, in one-letter code: Porphobilinogen deaminase (316 aa).

Cys242 is modified (S-(dipyrrolylmethanemethyl)cysteine).

Belongs to the HMBS family. Monomer. It depends on dipyrromethane as a cofactor.

It carries out the reaction 4 porphobilinogen + H2O = hydroxymethylbilane + 4 NH4(+). The protein operates within porphyrin-containing compound metabolism; protoporphyrin-IX biosynthesis; coproporphyrinogen-III from 5-aminolevulinate: step 2/4. Functionally, tetrapolymerization of the monopyrrole PBG into the hydroxymethylbilane pre-uroporphyrinogen in several discrete steps. The sequence is that of Porphobilinogen deaminase from Thioalkalivibrio sulfidiphilus (strain HL-EbGR7).